The chain runs to 612 residues: Threonine--tRNA ligase (612 aa).

The tract at residues 218–509 (NHRKLGVELG…LSEHFGGNFP (292 aa)) is catalytic. 3 residues coordinate Zn(2+): C310, H361, and H486.

This sequence belongs to the class-II aminoacyl-tRNA synthetase family. Homodimer. It depends on Zn(2+) as a cofactor.

The protein resides in the cytoplasm. It catalyses the reaction tRNA(Thr) + L-threonine + ATP = L-threonyl-tRNA(Thr) + AMP + diphosphate + H(+). Its function is as follows. Catalyzes the attachment of threonine to tRNA(Thr) in a two-step reaction: L-threonine is first activated by ATP to form Thr-AMP and then transferred to the acceptor end of tRNA(Thr). Also edits incorrectly charged L-seryl-tRNA(Thr). In Helicobacter pylori (strain Shi470), this protein is Threonine--tRNA ligase.